The primary structure comprises 207 residues: Outer-membrane lipoprotein carrier protein (207 aa).

Positions 1 to 21 (MRAIRMLLVSALALGTVTAYA) are cleaved as a signal peptide.

This sequence belongs to the LolA family. As to quaternary structure, monomer.

It localises to the periplasm. Participates in the translocation of lipoproteins from the inner membrane to the outer membrane. Only forms a complex with a lipoprotein if the residue after the N-terminal Cys is not an aspartate (The Asp acts as a targeting signal to indicate that the lipoprotein should stay in the inner membrane). This chain is Outer-membrane lipoprotein carrier protein, found in Pseudomonas putida (strain GB-1).